The chain runs to 160 residues: uncharacterized protein (160 aa).

A signal peptide spans 1 to 25 (MKVTLLLLLIAVLLLLLIFMKVCKQ).

This is an uncharacterized protein from Invertebrate iridescent virus 6 (IIV-6).